A 459-amino-acid polypeptide reads, in one-letter code: ERBB receptor feedback inhibitor 1 (459 aa).

Serine 2 is subject to N-acetylserine. 2 positions are modified to phosphothreonine: threonine 126 and threonine 130. Positions 227–352 (QNRVVPDPNP…VMPPTQSFAP (126 aa)) are disordered. Residues serine 250 and serine 271 each carry the phosphoserine modification. Positions 264-273 (SSCTHRASPS) are enriched in polar residues. Positions 282 to 291 (PPRVPIPPRP) are enriched in pro residues. Residue serine 300 is modified to Phosphoserine. Basic and acidic residues predominate over residues 310 to 323 (DEDRPPKVPPREPL). The span at 324-335 (SRSNSRTPSPKS) shows a compositional bias: polar residues. Residues 332–361 (SPKSLPSYLNGVMPPTQSFAPDPKYVSSKA) form an interaction with EGFR and ERBB2 and regulation of EGFR activation region. Serine 458 carries the post-translational modification Phosphoserine.

The protein belongs to the MIG6 family. Interacts with EGFR and ERBB2.

It localises to the cytoplasm. Its subcellular location is the cell membrane. The protein resides in the nucleus. In terms of biological role, negative regulator of EGFR signaling in skin morphogenesis. Acts as a negative regulator for several EGFR family members, including ERBB2, ERBB3 and ERBB4. Inhibits EGFR catalytic activity by interfering with its dimerization. Inhibits autophosphorylation of EGFR, ERBB2 and ERBB4. Important for normal keratinocyte proliferation and differentiation. Plays a role in modulating the response to steroid hormones in the uterus. Required for normal response to progesterone in the uterus and for fertility. Mediates epithelial estrogen responses in the uterus by regulating ESR1 levels and activation. Important for regulation of endometrium cell proliferation. Important for normal prenatal and perinatal lung development. This is ERBB receptor feedback inhibitor 1 (Errfi1) from Rattus norvegicus (Rat).